Reading from the N-terminus, the 407-residue chain is Argininosuccinate synthase (407 aa).

Residues 16 to 24 (AYSGGLDTS) and Ala-44 contribute to the ATP site. Residues Tyr-96 and Ser-101 each coordinate L-citrulline. Gly-126 provides a ligand contact to ATP. L-aspartate-binding residues include Thr-128, Asn-132, and Asp-133. An L-citrulline-binding site is contributed by Asn-132. 5 residues coordinate L-citrulline: Arg-136, Ser-185, Ser-194, Glu-270, and Tyr-282.

It belongs to the argininosuccinate synthase family. Type 1 subfamily. Homotetramer.

It localises to the cytoplasm. It catalyses the reaction L-citrulline + L-aspartate + ATP = 2-(N(omega)-L-arginino)succinate + AMP + diphosphate + H(+). The protein operates within amino-acid biosynthesis; L-arginine biosynthesis; L-arginine from L-ornithine and carbamoyl phosphate: step 2/3. The polypeptide is Argininosuccinate synthase (Shewanella oneidensis (strain ATCC 700550 / JCM 31522 / CIP 106686 / LMG 19005 / NCIMB 14063 / MR-1)).